The following is a 133-amino-acid chain: Small ribosomal subunit protein uS11 (133 aa).

Belongs to the universal ribosomal protein uS11 family. As to quaternary structure, part of the 30S ribosomal subunit. Interacts with proteins S7 and S18. Binds to IF-3.

Its function is as follows. Located on the platform of the 30S subunit, it bridges several disparate RNA helices of the 16S rRNA. Forms part of the Shine-Dalgarno cleft in the 70S ribosome. The chain is Small ribosomal subunit protein uS11 from Bordetella petrii (strain ATCC BAA-461 / DSM 12804 / CCUG 43448).